The chain runs to 284 residues: 3-methyl-2-oxobutanoate hydroxymethyltransferase (284 aa).

Positions 52 and 91 each coordinate Mg(2+). Residues 52–53 (DS), D91, and K121 contribute to the 3-methyl-2-oxobutanoate site. A Mg(2+)-binding site is contributed by E123. E191 functions as the Proton acceptor in the catalytic mechanism.

It belongs to the PanB family. As to quaternary structure, homodecamer; pentamer of dimers. The cofactor is Mg(2+).

The protein localises to the cytoplasm. The enzyme catalyses 3-methyl-2-oxobutanoate + (6R)-5,10-methylene-5,6,7,8-tetrahydrofolate + H2O = 2-dehydropantoate + (6S)-5,6,7,8-tetrahydrofolate. It participates in cofactor biosynthesis; (R)-pantothenate biosynthesis; (R)-pantoate from 3-methyl-2-oxobutanoate: step 1/2. Catalyzes the reversible reaction in which hydroxymethyl group from 5,10-methylenetetrahydrofolate is transferred onto alpha-ketoisovalerate to form ketopantoate. This Deinococcus radiodurans (strain ATCC 13939 / DSM 20539 / JCM 16871 / CCUG 27074 / LMG 4051 / NBRC 15346 / NCIMB 9279 / VKM B-1422 / R1) protein is 3-methyl-2-oxobutanoate hydroxymethyltransferase.